The primary structure comprises 458 residues: MLPSQSPAIFTVSRLNQTVRLLLEHEMGQVWISGEISNFTQPASGHWYFTLKDDTAQVRCAMFRNSNRRVTFRPQHGQQVLVRANITLYEPRGDYQIIVESMQPAGEGLLQQKYEQLKAKLQTEGLFDLQYKKSLPSPAHCVGVITSKTGAALHDILHVLKRRDPSLPVIIYSTAVQGDDAPGQIVRAIELANKRNECDVLIVGRGGGSLEDLWSFNDERVARAIFASRIPIVSAVGHETDVTIADFVADLRAPTPSAAAEVVSRNQQELLRQVQSTRQRLEMAMDYYLANRTRRFTQIHHRLQQQHPQLRLARQQTMLERLQKRMSFALENQLKRAGQQQQRLTRQLVQQNPQSRIHRAQTRIQQLEYRLAETLRAQLSATRERFGNAVTHLEAVSPLSTLARGYSVTSAADGAVLKQVKQVKVGETLITRLGDGVVISEVSAVTKTRKSRKKTSNP.

This sequence belongs to the XseA family. Heterooligomer composed of large and small subunits.

The protein localises to the cytoplasm. The enzyme catalyses Exonucleolytic cleavage in either 5'- to 3'- or 3'- to 5'-direction to yield nucleoside 5'-phosphates.. Functionally, bidirectionally degrades single-stranded DNA into large acid-insoluble oligonucleotides, which are then degraded further into small acid-soluble oligonucleotides. The chain is Exodeoxyribonuclease 7 large subunit from Escherichia coli O81 (strain ED1a).